Reading from the N-terminus, the 216-residue chain is Somatotropin (216 aa).

Positions 1 to 26 (MAAGPRTSVLLAFGLLCLPWPQDVGA) are cleaved as a signal peptide. Residue His-45 coordinates Zn(2+). Cysteines 78 and 189 form a disulfide. Phosphoserine is present on Ser-131. Residue Glu-198 participates in Zn(2+) binding. Residues Cys-206 and Cys-214 are joined by a disulfide bond.

The protein belongs to the somatotropin/prolactin family.

The protein resides in the secreted. Functionally, plays an important role in growth control. Its major role in stimulating body growth is to stimulate the liver and other tissues to secrete IGF1. It stimulates both the differentiation and proliferation of myoblasts. It also stimulates amino acid uptake and protein synthesis in muscle and other tissues. The polypeptide is Somatotropin (GH1) (Equus caballus (Horse)).